The following is a 957-amino-acid chain: Glycine dehydrogenase (decarboxylating) 2 (957 aa).

Lysine 707 carries the N6-(pyridoxal phosphate)lysine modification.

It belongs to the GcvP family. In terms of assembly, the glycine cleavage system is composed of four proteins: P, T, L and H. Requires pyridoxal 5'-phosphate as cofactor.

It carries out the reaction N(6)-[(R)-lipoyl]-L-lysyl-[glycine-cleavage complex H protein] + glycine + H(+) = N(6)-[(R)-S(8)-aminomethyldihydrolipoyl]-L-lysyl-[glycine-cleavage complex H protein] + CO2. In terms of biological role, the glycine cleavage system catalyzes the degradation of glycine. The P protein binds the alpha-amino group of glycine through its pyridoxal phosphate cofactor; CO(2) is released and the remaining methylamine moiety is then transferred to the lipoamide cofactor of the H protein. The protein is Glycine dehydrogenase (decarboxylating) 2 of Pseudomonas fluorescens (strain ATCC BAA-477 / NRRL B-23932 / Pf-5).